Reading from the N-terminus, the 454-residue chain is Cysteine--tRNA ligase (454 aa).

Cysteine 27 serves as a coordination point for Zn(2+). Positions 29–39 (PTVQDHFHIGH) match the 'HIGH' region motif. 3 residues coordinate Zn(2+): aspartate 207, histidine 232, and glutamate 236. The 'KMSKS' region motif lies at 265 to 269 (KMSKS). Lysine 268 lines the ATP pocket.

It belongs to the class-I aminoacyl-tRNA synthetase family. Requires Zn(2+) as cofactor.

It localises to the cytoplasm. It carries out the reaction tRNA(Cys) + L-cysteine + ATP = L-cysteinyl-tRNA(Cys) + AMP + diphosphate. In Thermoplasma volcanium (strain ATCC 51530 / DSM 4299 / JCM 9571 / NBRC 15438 / GSS1), this protein is Cysteine--tRNA ligase.